A 239-amino-acid chain; its full sequence is Tumor necrosis factor ligand superfamily member 8 (239 aa).

Residues 1-36 form a disordered region; it reads MEPGLQQAGSCGAPSPDPAMQVQPGSVASPWRSTRP. Residues 1–43 lie on the Cytoplasmic side of the membrane; it reads MEPGLQQAGSCGAPSPDPAMQVQPGSVASPWRSTRPWRSTSRS. Residues 44 to 67 traverse the membrane as a helical; Signal-anchor for type II membrane protein segment; it reads YFYLSTTALVCLVVAVAIILVLVV. Residues 68–239 are Extracellular-facing; sequence QKKDSTPNTT…LSVFLYSSSD (172 aa). N75, N86, N114, N158, N194, and N206 each carry an N-linked (GlcNAc...) asparagine glycan. In terms of domain architecture, THD spans 103–230; the sequence is SWAYLQVSKH…TNTFPLDNVL (128 aa). Cysteines 156 and 182 form a disulfide.

The protein belongs to the tumor necrosis factor family. As to quaternary structure, homotrimer.

The protein localises to the membrane. Its function is as follows. Cytokine that binds to TNFRSF8/CD30. Induces proliferation of T-cells. The polypeptide is Tumor necrosis factor ligand superfamily member 8 (Tnfsf8) (Mus musculus (Mouse)).